Here is a 492-residue protein sequence, read N- to C-terminus: Serine incorporator 4 (492 aa).

A run of 10 helical transmembrane segments spans residues 58-78 (FYIL…SKTV), 113-133 (AVYR…VLLV), 148-168 (SFWS…FCIP), 179-199 (IGIC…TAFA), 217-237 (FLGV…GAVL), 254-274 (LLSL…APCI), 281-301 (SGLL…FSAL), 330-350 (IPDA…VLFA), 421-441 (GFHF…TNWF), and 464-484 (VASC…PLLA).

Belongs to the TDE1 family.

Its subcellular location is the membrane. Functionally, incorporates a polar amino acid serine into membranes and facilitates the synthesis of two serine-derived lipids, phosphatidylserine and sphingolipids. This chain is Serine incorporator 4 (Serinc4), found in Rattus norvegicus (Rat).